The following is a 708-amino-acid chain: G-box-binding factor (708 aa).

Disordered regions lie at residues 1-29 (MLSTHHHQGNSSSSSSSSSPSQTIGGSDL) and 123-339 (QQAQ…QTIP). Low complexity-rich tracts occupy residues 11 to 21 (SSSSSSSSSPS), 123 to 219 (QQAQ…QHHQ), and 227 to 316 (SQPQ…SPST). The segment covering 324-333 (ETSNSEKKDS) has biased composition (basic and acidic residues). 2 repeat units span residues 339 to 368 (PKCTRCNEAASWKHDKRRWWCKECKKAFTP) and 481 to 510 (PPCPLCRGISSWKHDKKRYFCKECKKPFTP). Positions 511–604 (VGAGLSPSSS…PTYSPNPSLP (94 aa)) are disordered. Positions 516–590 (SPSSSPSSPK…SSISQSPLQL (75 aa)) are enriched in low complexity. Residues 591–600 (NYQTPTYSPN) show a composition bias toward polar residues.

It is found in the nucleus. Its function is as follows. cAMP-responsive transcriptional activator regulating late gene expression. Essential component of the developmental switch between early and late development. Binds to a number of CA/GT-rich gene regulatory elements. This Dictyostelium discoideum (Social amoeba) protein is G-box-binding factor (gbfA).